Consider the following 428-residue polypeptide: uncharacterized protein (428 aa).

H68 serves as a coordination point for Zn(2+). E71 (proton acceptor) is an active-site residue. Positions 72 and 143 each coordinate Zn(2+).

It belongs to the peptidase M16 family. Zn(2+) serves as cofactor.

This is an uncharacterized protein from Bacillus subtilis (strain 168).